The primary structure comprises 1088 residues: Serine/threonine-protein kinase LATS2 (1088 aa).

The interval 24–49 (EGLKQPSKSSVQGLPAGPNSDTSLDA) is disordered. Residue S83 is modified to Phosphoserine; by AURKA. A UBA domain is found at 98-139 (EVNRQMLQELVNAGCDQEMAGRALKQTGSRSIEAALEYISKM). The tract at residues 101 to 141 (RQMLQELVNAGCDQEMAGRALKQTGSRSIEAALEYISKMGY) is interaction with ubiquitinated AMOTL2. Residues 271 to 280 (RSPSFQSKTP) show a composition bias toward polar residues. Residues 271–323 (RSPSFQSKTPPETGGYASLPTKGQGGPPGAGLAFPPPAAGLYVPHPHHKQAGP) are disordered. The residue at position 279 (T279) is a Phosphothreonine. Residue S380 is modified to Phosphoserine. Disordered stretches follow at residues 383–428 (KPGL…SLPA) and 454–483 (PQTAVGPSHPAWVPAPAPAPAPAPAPAAEG). The span at 404–413 (SRTNSFNSHQ) shows a compositional bias: polar residues. The segment covering 466-478 (VPAPAPAPAPAPA) has biased composition (pro residues). A PPxY motif motif is present at residues 515-518 (PPPY). Residues 543–592 (SLRAGPNEPEGGDKSRKSAKGDKGGKDKKQIQTSPVPVRKNSRDEEKRES) form a disordered region. Over residues 553 to 572 (GGDKSRKSAKGDKGGKDKKQ) the composition is skewed to basic and acidic residues. S576 carries the post-translational modification Phosphoserine. Residues 583–592 (NSRDEEKRES) are compositionally biased toward basic and acidic residues. The Protein kinase domain maps to 668–973 (FVKIKTLGIG…ADDLKAHPFF (306 aa)). Residues 674–682 (LGIGAFGEV) and K697 each bind ATP. D791 (proton acceptor) is an active-site residue. Positions 974-1052 (SAIDFSSDIR…RRFFDDNGYP (79 aa)) constitute an AGC-kinase C-terminal domain. Residues 994–1022 (SHPMDTSNFDPVDEESPWNDASEGSTKAW) are disordered. The residue at position 1041 (T1041) is a Phosphothreonine. The interval 1056–1088 (PKPSGAEASQAESSDLESSDLVDQTEGCQPVYV) is disordered.

This sequence belongs to the protein kinase superfamily. AGC Ser/Thr protein kinase family. As to quaternary structure, interacts with and is phosphorylated by AURKA. Binds to AR. Interacts with AJUBA during mitosis and this complex regulates organization of the spindle apparatus through recruitment of gamma-tubulin to the centrosome. Interacts (via PPxY motif) with YAP1 (via WW domains). Interacts with MOB1A and MOB1B. Interacts with LIMD1, WTIP and AJUBA. Interacts with SNAI1. Interacts with WWC1, WWC2 and WWC3 (via their WW domains). Interacts (via UBA domain) with ubiquitinated AMOTL2; the interaction promotes LATS2 phosphorylation of YAP1. It depends on Mg(2+) as a cofactor. Post-translationally, autophosphorylated and phosphorylated during M-phase and the G1/S-phase of the cell cycle. Phosphorylated and activated by STK3/MST2. Phosphorylated by MAP4Ks; in parallel to STK3/MST2 and resulting to its activation. Phosphorylation by NUAK2 may regulate its activity in phosphorylation and inactivation YAP1. Expressed at high levels in heart and skeletal muscle and at lower levels in all other tissues examined.

The protein resides in the cytoplasm. Its subcellular location is the cytoskeleton. It is found in the microtubule organizing center. The protein localises to the centrosome. It localises to the spindle pole. The protein resides in the nucleus. It catalyses the reaction L-seryl-[protein] + ATP = O-phospho-L-seryl-[protein] + ADP + H(+). The enzyme catalyses L-threonyl-[protein] + ATP = O-phospho-L-threonyl-[protein] + ADP + H(+). In terms of biological role, negative regulator of YAP1 in the Hippo signaling pathway that plays a pivotal role in organ size control and tumor suppression by restricting proliferation and promoting apoptosis. The core of this pathway is composed of a kinase cascade wherein STK3/MST2 and STK4/MST1, in complex with its regulatory protein SAV1, phosphorylates and activates LATS1/2 in complex with its regulatory protein MOB1, which in turn phosphorylates and inactivates YAP1 oncoprotein and WWTR1/TAZ. Phosphorylation of YAP1 by LATS2 inhibits its translocation into the nucleus to regulate cellular genes important for cell proliferation, cell death, and cell migration. Also phosphorylates YAP1 in response to cell contact inhibition-driven WWP1 ubiquitination of AMOTL2, which results in LATS2 activation. Acts as a tumor suppressor which plays a critical role in centrosome duplication, maintenance of mitotic fidelity and genomic stability. Negatively regulates G1/S transition by down-regulating cyclin E/CDK2 kinase activity. Negative regulator of the androgen receptor. Phosphorylates SNAI1 in the nucleus leading to its nuclear retention and stabilization, which enhances its epithelial-mesenchymal transition and tumor cell invasion/migration activities. This tumor-promoting activity is independent of its effects upon YAP1 or WWTR1/TAZ. Acts as an activator of the NLRP3 inflammasome by mediating phosphorylation of 'Ser-265' of NLRP3 following NLRP3 palmitoylation, promoting NLRP3 activation by NEK7. The polypeptide is Serine/threonine-protein kinase LATS2 (Homo sapiens (Human)).